Here is a 293-residue protein sequence, read N- to C-terminus: Acetyl-coenzyme A carboxylase carboxyl transferase subunit beta (293 aa).

In terms of domain architecture, CoA carboxyltransferase N-terminal spans 29-293 (LWVKCPECGQ…GCKAKKAAGK (265 aa)). Cysteine 33, cysteine 36, cysteine 52, and cysteine 55 together coordinate Zn(2+). The C4-type zinc finger occupies 33–55 (CPECGQVVYRKDLHANASVCSNC).

This sequence belongs to the AccD/PCCB family. Acetyl-CoA carboxylase is a heterohexamer composed of biotin carboxyl carrier protein (AccB), biotin carboxylase (AccC) and two subunits each of ACCase subunit alpha (AccA) and ACCase subunit beta (AccD). Zn(2+) is required as a cofactor.

The protein localises to the cytoplasm. The catalysed reaction is N(6)-carboxybiotinyl-L-lysyl-[protein] + acetyl-CoA = N(6)-biotinyl-L-lysyl-[protein] + malonyl-CoA. The protein operates within lipid metabolism; malonyl-CoA biosynthesis; malonyl-CoA from acetyl-CoA: step 1/1. Functionally, component of the acetyl coenzyme A carboxylase (ACC) complex. Biotin carboxylase (BC) catalyzes the carboxylation of biotin on its carrier protein (BCCP) and then the CO(2) group is transferred by the transcarboxylase to acetyl-CoA to form malonyl-CoA. This chain is Acetyl-coenzyme A carboxylase carboxyl transferase subunit beta, found in Prochlorococcus marinus (strain MIT 9303).